The following is a 228-amino-acid chain: L-ribulose-5-phosphate 4-epimerase UlaF (228 aa).

Substrate is bound by residues 26–27 (GN), 43–44 (SG), and 72–73 (SS). The Zn(2+) site is built by Asp-74, His-93, and His-95. The active-site Proton donor/acceptor is Asp-118. His-167 contributes to the Zn(2+) binding site. The active-site Proton donor/acceptor is Tyr-225.

It belongs to the aldolase class II family. AraD/FucA subfamily. Zn(2+) is required as a cofactor.

The catalysed reaction is L-ribulose 5-phosphate = D-xylulose 5-phosphate. It participates in cofactor degradation; L-ascorbate degradation; D-xylulose 5-phosphate from L-ascorbate: step 4/4. Its function is as follows. Catalyzes the isomerization of L-ribulose 5-phosphate to D-xylulose 5-phosphate. Is involved in the anaerobic L-ascorbate utilization. The polypeptide is L-ribulose-5-phosphate 4-epimerase UlaF (Escherichia coli (strain ATCC 8739 / DSM 1576 / NBRC 3972 / NCIMB 8545 / WDCM 00012 / Crooks)).